A 196-amino-acid chain; its full sequence is Pyridoxal 5'-phosphate synthase subunit PdxT (196 aa).

47-49 (GES) contacts L-glutamine. Cysteine 79 functions as the Nucleophile in the catalytic mechanism. L-glutamine contacts are provided by residues arginine 106 and 134–135 (IR). Active-site charge relay system residues include histidine 170 and glutamate 172.

It belongs to the glutaminase PdxT/SNO family. In terms of assembly, in the presence of PdxS, forms a dodecamer of heterodimers. Only shows activity in the heterodimer.

The catalysed reaction is aldehydo-D-ribose 5-phosphate + D-glyceraldehyde 3-phosphate + L-glutamine = pyridoxal 5'-phosphate + L-glutamate + phosphate + 3 H2O + H(+). It carries out the reaction L-glutamine + H2O = L-glutamate + NH4(+). Its pathway is cofactor biosynthesis; pyridoxal 5'-phosphate biosynthesis. Functionally, catalyzes the hydrolysis of glutamine to glutamate and ammonia as part of the biosynthesis of pyridoxal 5'-phosphate. The resulting ammonia molecule is channeled to the active site of PdxS. This chain is Pyridoxal 5'-phosphate synthase subunit PdxT, found in Bacillus cereus (strain B4264).